A 458-amino-acid chain; its full sequence is MSSGHIVQVIGAVMDVEFPRDSVPKVYDALTIEGKQLVLEVQQQLGDGIVRTIAMGSTDGIKRGLVVENTNKPVSVPVGTKTLGRIMDVLGNPIDEKGPIGEEERWSIHRSAPSYAEQSSSNELLETGIKVIDLVCPFAKGGKVGLFGGAGVGKTVNMMELIRNIAIEHSGYSVFAGVGERTREGNDFYHEMTDSNVIDKVSLVYGQMNEPPGNRLRVALTGLTMAEKFRDEGRDVLFFVDNIYRYTLAGTEVSALLGRMPSAVGYQPTLAEEMGVLQERITSTKTGSITSVQAVYVPADDLTDPSPATTFSHLDATVVLSRDIASLGIYPAIDPLDSTSRQLDPLVIGQEHYDVARGVQMVLQRYKELKDIIAILGMDELSEEDKQTVNRSRKIQRFLSQPFFVAEVFTGSPGKYVSLKDTIRGFKGILDGEFDDLPEQAFYMIGSIDEAVEKAKKL.

148 to 155 (GGAGVGKT) provides a ligand contact to ATP.

This sequence belongs to the ATPase alpha/beta chains family. In terms of assembly, F-type ATPases have 2 components, CF(1) - the catalytic core - and CF(0) - the membrane proton channel. CF(1) has five subunits: alpha(3), beta(3), gamma(1), delta(1), epsilon(1). CF(0) has three main subunits: a(1), b(2) and c(9-12). The alpha and beta chains form an alternating ring which encloses part of the gamma chain. CF(1) is attached to CF(0) by a central stalk formed by the gamma and epsilon chains, while a peripheral stalk is formed by the delta and b chains.

Its subcellular location is the cell inner membrane. The catalysed reaction is ATP + H2O + 4 H(+)(in) = ADP + phosphate + 5 H(+)(out). Its function is as follows. Produces ATP from ADP in the presence of a proton gradient across the membrane. The catalytic sites are hosted primarily by the beta subunits. This Marinomonas sp. (strain MWYL1) protein is ATP synthase subunit beta 2.